Consider the following 338-residue polypeptide: Anthranilate phosphoribosyltransferase (338 aa).

5-phospho-alpha-D-ribose 1-diphosphate-binding positions include Gly81, 84 to 85 (GD), Thr89, 91 to 94 (NIST), 109 to 117 (KHGNRAQSS), and Thr121. Gly81 contributes to the anthranilate binding site. Ser93 is a Mg(2+) binding site. Position 112 (Asn112) interacts with anthranilate. Arg167 provides a ligand contact to anthranilate. Mg(2+)-binding residues include Asp225 and Glu226.

The protein belongs to the anthranilate phosphoribosyltransferase family. Homodimer. The cofactor is Mg(2+).

The catalysed reaction is N-(5-phospho-beta-D-ribosyl)anthranilate + diphosphate = 5-phospho-alpha-D-ribose 1-diphosphate + anthranilate. It participates in amino-acid biosynthesis; L-tryptophan biosynthesis; L-tryptophan from chorismate: step 2/5. Functionally, catalyzes the transfer of the phosphoribosyl group of 5-phosphorylribose-1-pyrophosphate (PRPP) to anthranilate to yield N-(5'-phosphoribosyl)-anthranilate (PRA). The sequence is that of Anthranilate phosphoribosyltransferase from Rhizobium rhizogenes (strain K84 / ATCC BAA-868) (Agrobacterium radiobacter).